Here is a 124-residue protein sequence, read N- to C-terminus: Translation initiation factor 5A (124 aa).

Positions 27 to 53 (TSYSTSKPGKHGSAKARVEGTGVFDGQ) are disordered. Hypusine is present on lysine 36.

This sequence belongs to the eIF-5A family.

Its subcellular location is the cytoplasm. In terms of biological role, functions by promoting the formation of the first peptide bond. This Natronomonas pharaonis (strain ATCC 35678 / DSM 2160 / CIP 103997 / JCM 8858 / NBRC 14720 / NCIMB 2260 / Gabara) (Halobacterium pharaonis) protein is Translation initiation factor 5A.